Consider the following 355-residue polypeptide: (R,S)-reticuline 7-O-methyltransferase (355 aa).

Residues 197–200 (VGGG), D221, 221–222 (DL), 241–242 (DM), and K255 each bind S-adenosyl-L-methionine. Catalysis depends on H259, which acts as the Proton acceptor.

The protein belongs to the class I-like SAM-binding methyltransferase superfamily. Cation-independent O-methyltransferase family. As to quaternary structure, homodimer. In terms of tissue distribution, expressed in capsules, buds and stems, and at lower levels in leaves. Localized to parenchyma cells within the vascular bundle, but only to those cells distal to laticifers. In roots, found in the pericycle within the stele.

It catalyses the reaction (S)-reticuline + S-adenosyl-L-methionine = (S)-laudanine + S-adenosyl-L-homocysteine + H(+). The enzyme catalyses (R)-reticuline + S-adenosyl-L-methionine = (R)-laudanine + S-adenosyl-L-homocysteine + H(+). Its function is as follows. Catalyzes the transfer of a methyl group to reticuline to form laudanine. Methylates the simple catechols guaiacol and isovanillic acid as well as the tetrahydrobenzylisoquinolines (R)-reticuline, (S)-reticuline, (R,S)-orientaline, (R)-protosinomenine and (R,S)-isoorientaline. Involved in the production of laudanine. In Papaver somniferum (Opium poppy), this protein is (R,S)-reticuline 7-O-methyltransferase.